Here is a 440-residue protein sequence, read N- to C-terminus: MSTSHASPRETTEGTVYTVTGGDWDEVVQSAARADDERIVVNMGPQHPSTHGVLRLILEIDGETVTEARCGIGYLHTGIEKNLEYRTWTQGTTFVTRMDYLTPFFNEAAYCLGVEKLLGIDDQIPDRATIIRVLLMELNRLSSHLVAIATGGMELGATTIMIYGFRDRELILDIYELITGLRMNHAYIRPGGLAQDLPPGAVDQIREFVKKMNKNLPEYDKLATGNPIFKARMQDVGYLDLAGCMALGATGPVLRSTGLPHDLRKTQPYCGYETYDFDVPTADTCDSYGRFLIRLEEMRQSLRIVEQCLDRLQPGPVMVADKKIAWPAQLALGPDGLGNSLDHIKKIMGTSMEALIHHFKLVTEGFRVPPAQVYTAVESPKGELGVHVVSDGGTRPFRVHFRDPSFTNLQAMAAMCEGGQVADVIVAVASIDPVMGGVDR.

The protein belongs to the complex I 49 kDa subunit family. NDH-1 is composed of 14 different subunits. Subunits NuoB, C, D, E, F, and G constitute the peripheral sector of the complex.

The protein resides in the cell membrane. It carries out the reaction a quinone + NADH + 5 H(+)(in) = a quinol + NAD(+) + 4 H(+)(out). In terms of biological role, NDH-1 shuttles electrons from NADH, via FMN and iron-sulfur (Fe-S) centers, to quinones in the respiratory chain. The immediate electron acceptor for the enzyme in this species is believed to be a menaquinone. Couples the redox reaction to proton translocation (for every two electrons transferred, four hydrogen ions are translocated across the cytoplasmic membrane), and thus conserves the redox energy in a proton gradient. The polypeptide is NADH-quinone oxidoreductase subunit D 2 (Streptomyces coelicolor (strain ATCC BAA-471 / A3(2) / M145)).